Reading from the N-terminus, the 218-residue chain is N-(5'-phosphoribosyl)anthranilate isomerase (218 aa).

The protein belongs to the TrpF family.

It carries out the reaction N-(5-phospho-beta-D-ribosyl)anthranilate = 1-(2-carboxyphenylamino)-1-deoxy-D-ribulose 5-phosphate. Its pathway is amino-acid biosynthesis; L-tryptophan biosynthesis; L-tryptophan from chorismate: step 3/5. This Rhodopseudomonas palustris (strain BisB5) protein is N-(5'-phosphoribosyl)anthranilate isomerase.